Here is a 152-residue protein sequence, read N- to C-terminus: Transcriptional regulator MraZ (152 aa).

SpoVT-AbrB domains follow at residues 5–52 (AHAI…PLCE) and 81–124 (ASEC…SETR).

The protein belongs to the MraZ family. Forms oligomers.

Its subcellular location is the cytoplasm. It localises to the nucleoid. The protein is Transcriptional regulator MraZ of Tolumonas auensis (strain DSM 9187 / NBRC 110442 / TA 4).